A 218-amino-acid chain; its full sequence is Fucoxanthin-chlorophyll a-c binding protein, chloroplastic (218 aa).

Residues 1 to 36 (MFYSAAVAALMVGSASAFLAPAQFNSVAKSSGALSM) constitute a chloroplast transit peptide.

Belongs to the fucoxanthin chlorophyll protein family. The LHC complex of chromophytic algae is composed of fucoxanthin, chlorophyll A and C bound non-covalently by fucoxanthin chlorophyll proteins (FCPs). The ratio of pigments in this LHC is; fucoxanthin: chlorophyll C: chlorophyll A; (0.6-1): (0.1-0.3): (1).

The protein resides in the plastid. It is found in the chloroplast thylakoid membrane. Its function is as follows. The light-harvesting complex (LHC) functions as a light receptor, it captures and delivers excitation energy to photosystems with which it is closely associated. Energy is transferred from the carotenoid and chlorophyll C (or B) to chlorophyll A and the photosynthetic reaction centers where it is used to synthesize ATP and reducing power. In Chattonella marina var. antiqua (Red tide flagellate), this protein is Fucoxanthin-chlorophyll a-c binding protein, chloroplastic.